Consider the following 561-residue polypeptide: MDPPGYNCFVDKDKMDASIQDLGPKELNCTELQELKQLARQGYWAQSHTLRGKVYQRLIRDIPCRTVTPDASVYSDIVGKIVGKHSSSSLPLPEFVDNTQVPTYCLNTRGEGAVRKILLCIANQFPDISFCPALPAVVALLLHYSIDEAECFEKACRILSCNDPTKKLIDQSFLAFESSCMTFGDLVNKYCQAAHKLMVAVSEDVLQVYSDWQRWLFGELPLNYFARVFDVFLVEGYKVLYRVALAILKFFHKVRAGQPLESDNVKQDIRMFVKDIAKTVSPEKLLEKAFAIRLFSRKEIQLLQMANEKALRQKGITVKQKSVSLSKRQFVHLAVHAENFHSEIVSVKEMRDIWSWIPERFALCQPLLLFSSLQHGYSLSRFYFQCEGHEPTLLLIKTTQKEVCGAYLSTDWSERTKFGGKLGFFGTGECFVFRLQPEVQRYEWVVIKHPELTKATSLKSSEAAGSSSLISHCSSDPADRLSPFLAARHFNLPSKTESMFMAGGNDCLIIGGGGGQALYVDGDLNRGRTGHCDTFNNQPLCSENFLIAAVEAWGFQDPDTE.

Positions 36 and 40 each coordinate a 1,2-diacyl-sn-glycero-3-phospho-(1D-myo-inositol). Residues 45 to 236 enclose the Rab-GAP TBC domain; sequence AQSHTLRGKV…RVFDVFLVEG (192 aa). A 1,2-diacyl-sn-glycero-3-phospho-(1D-myo-inositol) contacts are provided by residues lysine 238, arginine 242, and 293 to 297; that span reads RLFSR. The TLDc domain occupies 343-556; that stretch reads EIVSVKEMRD…IAAVEAWGFQ (214 aa). A phosphoserine mark is found at serine 475 and serine 482.

In terms of assembly, interacts with ARF6. In terms of tissue distribution, expressed in brain, particularly at the level of the cortex and the hippocampus. Expressed in the inner ear in spiral ganglion cells, a collection of neurons critical for hearing and balance.

It localises to the cell membrane. It is found in the cytoplasm. The protein resides in the cytoplasmic vesicle membrane. The protein localises to the presynapse. In terms of biological role, may act as a GTPase-activating protein for Rab family protein(s). Involved in neuronal projections development, probably through a negative modulation of ARF6 function. Involved in the regulation of synaptic vesicle trafficking. This chain is TBC1 domain family member 24 (Tbc1d24), found in Mus musculus (Mouse).